The following is a 497-amino-acid chain: Chlorophyllide reductase 52.5 kDa chain (497 aa).

Helical transmembrane passes span valine 65–isoleucine 82, alanine 126–leucine 142, and methionine 216–valine 233.

Belongs to the BchN/ChlN family. In terms of assembly, chlorophyllide reductase is composed of three subunits; BchX, BchY and BchZ. Forms a heterodimer of one BchY and one BchZ subunit.

It localises to the cell membrane. The catalysed reaction is 3-deacetyl-3-vinylbacteriochlorophyllide a + 2 oxidized [2Fe-2S]-[ferredoxin] + ADP + phosphate = chlorophyllide a + 2 reduced [2Fe-2S]-[ferredoxin] + ATP + H2O + H(+). It catalyses the reaction bacteriochlorophyllide a + 2 oxidized [2Fe-2S]-[ferredoxin] + ADP + phosphate = 3-acetyl-3-devinylchlorophyllide a + 2 reduced [2Fe-2S]-[ferredoxin] + ATP + H2O + H(+). The enzyme catalyses 3-deacetyl-3-(1-hydroxyethyl)bacteriochlorophyllide a + 2 oxidized [2Fe-2S]-[ferredoxin] + ADP + phosphate = 3-devinyl-3-(1-hydroxyethyl)chlorophyllide a + 2 reduced [2Fe-2S]-[ferredoxin] + ATP + H2O + H(+). Its pathway is porphyrin-containing compound metabolism; bacteriochlorophyll biosynthesis (light-independent). In terms of biological role, converts chlorophylls (Chl) into bacteriochlorophylls (BChl) by reducing ring B of the tetrapyrrole. This is Chlorophyllide reductase 52.5 kDa chain (bchY) from Rhodobacter capsulatus (strain ATCC BAA-309 / NBRC 16581 / SB1003).